Consider the following 579-residue polypeptide: Type II methyltransferase M.BseCI (579 aa).

This sequence belongs to the N(4)/N(6)-methyltransferase family.

It carries out the reaction a 2'-deoxyadenosine in DNA + S-adenosyl-L-methionine = an N(6)-methyl-2'-deoxyadenosine in DNA + S-adenosyl-L-homocysteine + H(+). In terms of biological role, a gamma subtype methylase, recognizes the double-stranded sequence 5'-ATCGAT-3', methylation on A-5 on both strands, and protects the DNA from cleavage by the BanIII endonuclease. In Geobacillus stearothermophilus (Bacillus stearothermophilus), this protein is Type II methyltransferase M.BseCI.